The chain runs to 366 residues: Putative [LysW]-aminoadipate semialdehyde/glutamate semialdehyde transaminase (366 aa).

Pyridoxal 5'-phosphate is bound by residues 90-91 and Phe117; that span reads GT. A substrate-binding site is contributed by Arg120. 202–205 contributes to the pyridoxal 5'-phosphate binding site; that stretch reads DEVQ. Residue Lys230 is modified to N6-(pyridoxal phosphate)lysine. Ser254 is a binding site for substrate. Pyridoxal 5'-phosphate is bound at residue Thr255.

The protein belongs to the class-III pyridoxal-phosphate-dependent aminotransferase family. LysJ subfamily. In terms of assembly, homodimer. Pyridoxal 5'-phosphate is required as a cofactor.

It is found in the cytoplasm. The enzyme catalyses [amino-group carrier protein]-C-terminal-gamma-(L-lysyl)-L-glutamate + 2-oxoglutarate = [amino-group carrier protein]-C-terminal-N-(1-carboxy-5-oxopentan-1-yl)-L-glutamine + L-glutamate. It carries out the reaction [amino-group carrier protein]-C-terminal-gamma-(L-ornithyl)-L-glutamate + 2-oxoglutarate = [amino-group carrier protein]-C-terminal-gamma-(L-glutamyl-5-semialdehyde)-L-glutamate + L-glutamate. It functions in the pathway amino-acid biosynthesis; L-lysine biosynthesis via AAA pathway; L-lysine from L-alpha-aminoadipate (Thermus route): step 4/5. The protein operates within amino-acid biosynthesis; L-arginine biosynthesis. In terms of biological role, involved in both the arginine and lysine biosynthetic pathways. The polypeptide is Putative [LysW]-aminoadipate semialdehyde/glutamate semialdehyde transaminase (Pyrococcus furiosus (strain ATCC 43587 / DSM 3638 / JCM 8422 / Vc1)).